Reading from the N-terminus, the 1222-residue chain is BOS complex subunit NOMO3 (1222 aa).

The first 31 residues, M1–G31, serve as a signal peptide directing secretion. The Extracellular segment spans residues S32–D1155. N50, N218, and N618 each carry an N-linked (GlcNAc...) asparagine glycan. Residues I1156–N1176 traverse the membrane as a helical segment. Residues H1177 to T1222 lie on the Cytoplasmic side of the membrane. The segment at G1198–T1222 is disordered. Residues Q1213–T1222 show a composition bias toward basic residues.

Component of the back of Sec61 (BOS) complex, composed of NCLN/Nicalin, NOMO (NOMO1, NOMO2 or NOMO3) and TMEM147. The BOS complex is part of the multi-pass translocon (MPT) complex, composed of three subcomplexes, the GEL complex (composed of RAB5IF/OPTI and TMCO1), the BOS complex (composed of NCLN/Nicalin, NOMO and TMEM147) and the PAT complex (composed of WDR83OS/Asterix and CCDC47). The MPT complex associates with the SEC61 complex. Due to the strong similarity between NOMO1, NOMO2 and NOMO3, similar interaction pattern probably occur for the three gene copies.

It is found in the endoplasmic reticulum membrane. Functionally, component of the multi-pass translocon (MPT) complex that mediates insertion of multi-pass membrane proteins into the lipid bilayer of membranes. The MPT complex takes over after the SEC61 complex: following membrane insertion of the first few transmembrane segments of proteins by the SEC61 complex, the MPT complex occludes the lateral gate of the SEC61 complex to promote insertion of subsequent transmembrane regions. The sequence is that of BOS complex subunit NOMO3 (NOMO3) from Homo sapiens (Human).